The sequence spans 491 residues: Regulatory protein NPR5 (491 aa).

Positions 26-116 constitute a BTB domain; it reads SDVTFSVEGR…LYSGQVSIVP (91 aa). The C2HC NPR-type zinc-finger motif lies at 122 to 136; the sequence is RPNCGERGCWHTHCS. Cysteine 125, cysteine 130, histidine 132, and cysteine 135 together coordinate Zn(2+). 4 ANK repeats span residues 254–283, 284–313, 318–347, and 351–385; these read QKIRRMRRALDSSDVELVKLMVMGEGLNLD, ESLALHYAVESCSREVVKALLELGAADVNY, AGKTPLHIAAEMVSPDMVAVLLDHHADPNV, and GGITPLDILRTLTSDFLFKGAVPGLTHIEPNKLRL. A disordered region spans residues 400–491; that stretch reads EEGNNSNNQN…MYHHHHQHHF (92 aa). The segment covering 403 to 413 has biased composition (low complexity); it reads NNSNNQNNDNN. Positions 457–470 are enriched in basic and acidic residues; sequence DQGDDHNSQREGMS.

Belongs to the plant 'ANKYRIN-BTB/POZ' family. 'NOOT-BOP-COCH-like' (NBCL) subfamily. Homodimer or heterodimer with BOP1. Interacts with PAN. In terms of tissue distribution, highly expressed in young floral meristem. Predominantly expressed in the boundary between floral meristem (FM) and sepal primordia.

The protein resides in the cytoplasm. It localises to the nucleus. It participates in protein modification; protein ubiquitination. May act as a substrate-specific adapter of an E3 ubiquitin-protein ligase complex (CUL3-RBX1-BTB) which mediates the ubiquitination and subsequent proteasomal degradation of target proteins. Acts redundantly with BOP2. BOP1/2 promote leaf and floral meristem fate and determinacy in a pathway targeting AP1 and AGL24. BOP1/2 act as transcriptional co-regulators through direct interaction with TGA factors, including PAN, a direct regulator of AP1. Controls lateral organ fate through positive regulation of adaxial-abaxial polarity genes ATHB-14/PHB, YAB1/FIL and YAB3, and through positive regulation of LOB domain-containing genes LOB, LBD6/AS2 and LBD36. Promotes and maintains a developmentally determinate state in leaf cells through the negative regulation of JAG, JGL and class I KNOX genes. Is also involved in nectary development, formation of normal abscission zones (AZs) and suppression of bract formation, probably by regulating the cell wall disorganization. The chain is Regulatory protein NPR5 from Arabidopsis thaliana (Mouse-ear cress).